A 630-amino-acid polypeptide reads, in one-letter code: Probable potassium transport system protein Kup (630 aa).

The next 12 helical transmembrane spans lie at 19-39 (GLIG…LYAV), 59-79 (LLSL…VLLI), 108-128 (WIIG…ATIT), 145-165 (PGLK…LFFV), 173-193 (VGGA…ALGL), 220-240 (LLAF…EALY), 255-275 (WLFF…ALVI), 284-304 (PFFF…ATIA), 345-365 (IYVP…VLGF), 374-394 (AYGI…AFVY), 405-425 (TVLV…SNVL), and 427-447 (VFDG…VMTT).

Belongs to the HAK/KUP transporter (TC 2.A.72) family.

It localises to the cell inner membrane. The catalysed reaction is K(+)(in) + H(+)(in) = K(+)(out) + H(+)(out). Functionally, transport of potassium into the cell. Likely operates as a K(+):H(+) symporter. The sequence is that of Probable potassium transport system protein Kup from Acidiphilium cryptum (strain JF-5).